Consider the following 386-residue polypeptide: MDRFVWTSGLLEINETLVIQQRGVRVYDGEEKIKFDAGTLLLSTHRLIWRDQKNNECCMAIPLSQIVFIEEQAAGIGKSAKIVVHLHPAPPNKEPGPFQSSKNSYIKLSFKEHGQIEFYRRLSEEMTQRRWETVPVSQSLQTKKGPQPGRIRAVGIVGIERKLEEKRKETDKNISEAFEDLSKLMIQAKEMVELSKSIANKIKEKQGDVTEDETIRFKSYLLSMGIANPVTRETYGSGTQYHMQLAKQLAGILQAPLEERGGIMSLTEVYCLVNRARGMELLSPEDLVNACKMLEGLKLPVRLRVFDSGVMVIELQTHKEEEMVASALETVSERGSLTSEEFAKLVGMSVLLAKERLLLAEKMGHLCRDDSVEGLRFYPNLFMTQN.

A GLUE N-terminal domain is found at 1-88 (MDRFVWTSGL…SAKIVVHLHP (88 aa)). Positions 105–138 (YIKLSFKEHGQIEFYRRLSEEMTQRRWETVPVSQ) constitute a GLUE C-terminal domain. Residues 160–185 (ERKLEEKRKETDKNISEAFEDLSKLM) adopt a coiled-coil conformation.

Belongs to the VPS36 family. In terms of assembly, component of a complex at least composed of ELL, SNF8/EAP30, VPS25/EAP20 and VPS36/EAP45. Component of the endosomal sorting complex required for transport II (ESCRT-II), composed of SNF8, VPS36 and two copies of VPS25. Interacts with VPS25, SNF8, TSG101 and CHMP6. Interacts (via GLUE domain) with ubiquitin. Interacts with RILPL1 (via the C-terminal domain); which recruits ESCRT-II to the endosome membranes. Interacts with ECPAS.

The protein localises to the cytoplasm. The protein resides in the endosome. Its subcellular location is the late endosome. It is found in the membrane. It localises to the nucleus. Functionally, component of the ESCRT-II complex (endosomal sorting complex required for transport II), which is required for multivesicular body (MVB) formation and sorting of endosomal cargo proteins into MVBs. The MVB pathway mediates delivery of transmembrane proteins into the lumen of the lysosome for degradation. The ESCRT-II complex is probably involved in the recruitment of the ESCRT-III complex. Its ability to bind ubiquitin probably plays a role in endosomal sorting of ubiquitinated cargo proteins by ESCRT complexes. The ESCRT-II complex may also play a role in transcription regulation, possibly via its interaction with ELL. Binds phosphoinosides such as PtdIns(3,4,5)P3. The polypeptide is Vacuolar protein-sorting-associated protein 36 (Vps36) (Rattus norvegicus (Rat)).